The sequence spans 41 residues: Large ribosomal subunit protein bL36 (41 aa).

It belongs to the bacterial ribosomal protein bL36 family.

The polypeptide is Large ribosomal subunit protein bL36 (Xanthobacter autotrophicus (strain ATCC BAA-1158 / Py2)).